The primary structure comprises 1249 residues: Protein transport protein Sec31A (1249 aa).

WD repeat units follow at residues 4–47, 64–111, 120–160, 166–206, 209–254, 258–298, and 301–342; these read KEID…EIFE, SSSH…AGDK, KHTG…TPMT, QPPE…PIIK, DHSN…SPLR, NHAR…VLYE, and TNTQ…DGLR. The segment at 161 to 470 is interaction with SEC13; sequence PGAKTQPPED…IDASQTDFEK (310 aa). The WD 8; interaction with SEC13 repeat unit spans residues 397-429; the sequence is SFSFGGKLVTFENVTGQPQQGAEQPRRQPVFIS. The residue at position 423 (arginine 423) is an Asymmetric dimethylarginine. A phosphoserine mark is found at serine 526 and serine 531. Lysine 647 is covalently cross-linked (Glycyl lysine isopeptide (Lys-Gly) (interchain with G-Cter in ubiquitin)). 3 disordered regions span residues 790–829, 842–940, and 954–1123; these read QGRSVPGQESSRSSYEGQPLPKGGPGPLAGHPQVSRVQSQ, TTWS…RYPN, and PHMY…PIGN. The span at 796–805 shows a compositional bias: polar residues; the sequence is GQESSRSSYE. Serine 799 carries the post-translational modification Phosphoserine. Residues 800–1142 are interaction with PDCD6; sequence SRSSYEGQPL…TEKITKKPIP (343 aa). An ALG-2-binding site motif-2 (ABS-2) motif is present at residues 873–879; sequence GFIMHGN. The segment covering 898–908 has biased composition (pro residues); that stretch reads QPPPYPQPQPY. Low complexity-rich tracts occupy residues 961–970 and 991–1007; these read PASSPTSSSA and PSSSAYALPPGTTGTPP. The span at 1013–1024 shows a compositional bias: polar residues; that stretch reads PASQRTGPQNGW. Positions 1056–1074 are enriched in low complexity; that stretch reads PGGDPQPQGLQQQPSASGP. Threonine 1190 carries the phosphothreonine modification. Serine 1192 carries the phosphoserine modification. Lysine 1246 is covalently cross-linked (Glycyl lysine isopeptide (Lys-Gly) (interchain with G-Cter in ubiquitin)).

Belongs to the WD repeat SEC31 family. As to quaternary structure, COPII is composed of at least 5 proteins: the SEC23/24 complex, the SEC13/31 complex and SAR1. SEC13 and SEC31 make a 2:2 tetramer that forms the edge element of the COPII outer coat. The tetramer self-assembles in multiple copies to form the complete polyhedral cage. Interacts (via WD 8) with SEC13. Interacts with PDCD6; interaction takes place in response to cytosolic calcium increase and leads to bridge together the BCR(KLHL12) complex and SEC31A, leading to monoubiquitination. Interacts with KLHL12. In terms of processing, monoubiquitinated by the BCR(KLHL12) E3 ubiquitin ligase complex, leading to regulate the size of COPII coats. As to expression, ubiquitously expressed.

Its subcellular location is the cytoplasm. It localises to the cytoplasmic vesicle. It is found in the COPII-coated vesicle membrane. The protein resides in the endoplasmic reticulum membrane. Component of the coat protein complex II (COPII) which promotes the formation of transport vesicles from the endoplasmic reticulum (ER). The coat has two main functions, the physical deformation of the endoplasmic reticulum membrane into vesicles and the selection of cargo molecules. The protein is Protein transport protein Sec31A (Sec31a) of Rattus norvegicus (Rat).